Reading from the N-terminus, the 1028-residue chain is Contactin-6 (1028 aa).

Residues 1–19 (MRLLWKLVILLPLINSCAG) form the signal peptide. Ig-like C2-type domains are found at residues 32–117 (PQDV…AKLQ), 122–208 (EDFE…RSVQ), 227–308 (PKIE…RNLA), 318–402 (PEWE…AELR), 408–502 (PDFS…RTII), and 500–587 (TIIT…ERLS). Disulfide bonds link cysteine 50/cysteine 100, cysteine 144/cysteine 196, cysteine 249/cysteine 297, cysteine 339/cysteine 386, cysteine 431/cysteine 479, and cysteine 521/cysteine 577. N-linked (GlcNAc...) asparagine glycans are attached at residues asparagine 65 and asparagine 193. N-linked (GlcNAc...) asparagine glycans are attached at residues asparagine 368, asparagine 377, and asparagine 468. 4 consecutive Fibronectin type-III domains span residues 600–698 (PPED…TKAS), 703–800 (APGN…SGED), 805–901 (APRG…TKKS), and 902–996 (PPSQ…KMSS). 4 N-linked (GlcNAc...) asparagine glycosylation sites follow: asparagine 659, asparagine 765, asparagine 860, and asparagine 865. Tyrosine 882 is modified (phosphotyrosine). 4 N-linked (GlcNAc...) asparagine glycosylation sites follow: asparagine 895, asparagine 931, asparagine 956, and asparagine 957. Serine 999 carries the GPI-anchor amidated serine lipid modification. Positions 1000 to 1028 (TGVQISKPSTQSLSMVGVFYCFAIHPLSR) are cleaved as a propeptide — removed in mature form.

Belongs to the immunoglobulin superfamily. Contactin family. As to quaternary structure, interacts with PTPRG. In terms of tissue distribution, expressed in brain. In brain, it is preferentially expressed in the accessory olfactory bulb, layers II/III and V of the cerebral cortex, piriform cortex, anterior thalamic nuclei, locus coeruleus of the pons and mesencephalic trigeminal nucleus and in Purkinje cells of the cerebellum.

It localises to the cell membrane. In terms of biological role, contactins mediate cell surface interactions during nervous system development. Participates in oligodendrocytes generation by acting as a ligand of NOTCH1. Its association with NOTCH1 promotes NOTCH1 activation through the released notch intracellular domain (NICD) and subsequent translocation to the nucleus. Involved in motor coordination. This is Contactin-6 (Cntn6) from Mus musculus (Mouse).